The chain runs to 755 residues: Anaphase-promoting complex subunit 5 (755 aa).

Position 195 is a phosphoserine (S195). TPR repeat units follow at residues 209 to 249, 250 to 300, 301 to 337, 338 to 378, 379 to 418, 419 to 466, 467 to 500, 501 to 540, 541 to 580, 581 to 620, 621 to 660, 661 to 696, and 697 to 736; these read QKQA…FNPD, FAEA…GRSL, RYAA…SNDH, VCLQ…YLAS, LGIQ…SELI, DISI…TESF, AVAL…FPPN, SQHA…ALNS, IEGV…TEMV, ISVL…QYLA, SETV…ILDK, GRAM…NLNE, and AKNY…CAML. Residue T232 is modified to Phosphothreonine.

Belongs to the APC5 family. In terms of assembly, the mammalian APC/C is composed at least of 14 distinct subunits ANAPC1, ANAPC2, CDC27/APC3, ANAPC4, ANAPC5, CDC16/APC6, ANAPC7, CDC23/APC8, ANAPC10, ANAPC11, CDC26/APC12, ANAPC13, ANAPC15 and ANAPC16 that assemble into a complex of at least 19 chains with a combined molecular mass of around 1.2 MDa; APC/C interacts with FZR1 and FBXO5.

Its subcellular location is the nucleus. It is found in the cytoplasm. The protein resides in the cytoskeleton. The protein localises to the spindle. It participates in protein modification; protein ubiquitination. Component of the anaphase promoting complex/cyclosome (APC/C), a cell cycle-regulated E3 ubiquitin ligase that controls progression through mitosis and the G1 phase of the cell cycle. The APC/C complex acts by mediating ubiquitination and subsequent degradation of target proteins: it mainly mediates the formation of 'Lys-11'-linked polyubiquitin chains and, to a lower extent, the formation of 'Lys-48'- and 'Lys-63'-linked polyubiquitin chains. The APC/C complex catalyzes assembly of branched 'Lys-11'-/'Lys-48'-linked branched ubiquitin chains on target proteins. This Homo sapiens (Human) protein is Anaphase-promoting complex subunit 5 (ANAPC5).